We begin with the raw amino-acid sequence, 198 residues long: dITP/XTP pyrophosphatase (198 aa).

10 to 15 (SGSDHK) is a substrate binding site. Glu-43 and Asp-72 together coordinate Mg(2+). The active-site Proton acceptor is the Asp-72. Substrate-binding positions include Ser-73, 154-157 (FGYD), Lys-177, and 182-183 (HR).

The protein belongs to the HAM1 NTPase family. Homodimer. Requires Mg(2+) as cofactor.

The enzyme catalyses XTP + H2O = XMP + diphosphate + H(+). It carries out the reaction dITP + H2O = dIMP + diphosphate + H(+). It catalyses the reaction ITP + H2O = IMP + diphosphate + H(+). Functionally, pyrophosphatase that catalyzes the hydrolysis of nucleoside triphosphates to their monophosphate derivatives, with a high preference for the non-canonical purine nucleotides XTP (xanthosine triphosphate), dITP (deoxyinosine triphosphate) and ITP. Seems to function as a house-cleaning enzyme that removes non-canonical purine nucleotides from the nucleotide pool, thus preventing their incorporation into DNA/RNA and avoiding chromosomal lesions. The sequence is that of dITP/XTP pyrophosphatase from Leptospira biflexa serovar Patoc (strain Patoc 1 / Ames).